The primary structure comprises 392 residues: Chalcone synthase (392 aa).

Residue C165 is part of the active site.

Belongs to the thiolase-like superfamily. Chalcone/stilbene synthases family.

It carries out the reaction (E)-4-coumaroyl-CoA + 3 malonyl-CoA + 3 H(+) = 2',4,4',6'-tetrahydroxychalcone + 3 CO2 + 4 CoA. It participates in secondary metabolite biosynthesis; flavonoid biosynthesis. In terms of biological role, the primary product of this enzyme is 4,2',4',6'-tetrahydroxychalcone (also termed naringenin-chalcone or chalcone) which can under specific conditions spontaneously isomerize into naringenin. The chain is Chalcone synthase (CHS) from Persea americana (Avocado).